The following is a 705-amino-acid chain: Polyribonucleotide nucleotidyltransferase (705 aa).

Mg(2+)-binding residues include D487 and D493. A KH domain is found at P554–I613. The S1 motif domain maps to G623 to K691.

Belongs to the polyribonucleotide nucleotidyltransferase family. In terms of assembly, homodimer. Component of a possible RNA degradosome complex composed of rny, rnjA, rnjB, pnp, pfkA and eno (although rnjA and rnjB's presence is unclear). RNA helicase CshA may also be a member of this complex. Mg(2+) serves as cofactor.

It localises to the cytoplasm. It carries out the reaction RNA(n+1) + phosphate = RNA(n) + a ribonucleoside 5'-diphosphate. Involved in mRNA degradation. Catalyzes the phosphorolysis of single-stranded polyribonucleotides processively in the 3'- to 5'-direction. Necessary for competence development in Bacillus subtilis. May be necessary for modification of the srfA transcript (stabilization or translation activation). Involved in processing precursor type I toxin-antitoxin RNAs antitoxin SR4 and SR5 RNAs to their mature forms. The polypeptide is Polyribonucleotide nucleotidyltransferase (Bacillus subtilis (strain 168)).